A 352-amino-acid chain; its full sequence is Gap junction alpha-4 protein (352 aa).

Residues 2–23 are Cytoplasmic-facing; sequence GDWEFLEKLLDQVQEHSTSIGK. A helical transmembrane segment spans residues 24-46; that stretch reads IWLMVLFIFRILILGLAGESVWG. Residues 47 to 76 lie on the Extracellular side of the membrane; it reads DEQSDFTCNTEQPGCTNVCYDKAFPISHVR. Residues 77-99 traverse the membrane as a helical segment; that stretch reads YWVLQFLFVSTPTLFYLGHVIYL. Residues 100-153 are Cytoplasmic-facing; the sequence is SRKEEKLKQKESELRALDDKEQVEQAIAIIEKKKLKLYIQEDGTVKIKGALMYT. The chain crosses the membrane as a helical span at residues 154–176; sequence YLTSVIFKSIFEAGFLLGQWYLY. Topologically, residues 177–208 are extracellular; that stretch reads GFVMTPIYVCERVPCPHKVDCFVSRPMEKTIF. The chain crosses the membrane as a helical span at residues 209–231; sequence IIFMLVVSLISLFLNVLELIHLI. Over 232-352 the chain is Cytoplasmic; it reads CKSMIHALKK…SSSASKKQYV (121 aa). A disordered region spans residues 332-352; sequence HSTVEKASTRASSSASKKQYV. The span at 340 to 352 shows a compositional bias: low complexity; sequence TRASSSASKKQYV.

The protein belongs to the connexin family. Alpha-type (group II) subfamily. A connexon is composed of a hexamer of connexins. Expressed in ovarian somatic cells, heart, leg muscle, liver and eye but not in brain.

It is found in the cell membrane. Its subcellular location is the cell junction. The protein resides in the gap junction. Functionally, one gap junction consists of a cluster of closely packed pairs of transmembrane channels, the connexons, through which materials of low MW diffuse from one cell to a neighboring cell. In Xenopus laevis (African clawed frog), this protein is Gap junction alpha-4 protein (gja4).